The sequence spans 144 residues: Intraflagellar transport protein 25 homolog (144 aa).

Residues Asn-29, Asp-32, and Thr-37 each coordinate Ca(2+).

This sequence belongs to the IFT25 family. In terms of assembly, component of the IFT complex B, at least composed of IFT20, IFT22, IFT25, IFT27, IFT46, IFT52, TRAF3IP1/IFT54, IFT57, IFT74, IFT80, IFT81, and IFT88. Interacts with IFT27. Interacts with IFT88. Detected in placenta.

It is found in the cell projection. Its subcellular location is the cilium. Component of the IFT complex B required for sonic hedgehog/SHH signaling. May mediate transport of SHH components: required for the export of SMO and PTCH1 receptors out of the cilium and the accumulation of GLI2 at the ciliary tip in response to activation of the SHH pathway, suggesting it is involved in the dynamic transport of SHH signaling molecules within the cilium. Not required for ciliary assembly. Its role in intraflagellar transport is mainly seen in tissues rich in ciliated cells such as kidney and testis. Essential for male fertility, spermiogenesis and sperm flagella formation. Plays a role in the early development of the kidney. May be involved in the regulation of ureteric bud initiation. The protein is Intraflagellar transport protein 25 homolog of Homo sapiens (Human).